A 223-amino-acid chain; its full sequence is F420-dependent NADP reductase (223 aa).

NADP(+) contacts are provided by residues 9–12 (TGDQ), 30–31 (SR), Lys-35, Leu-75, and Val-101.

The protein belongs to the F420-dependent NADP reductase family.

The enzyme catalyses reduced coenzyme F420-(gamma-L-Glu)(n) + NADP(+) = oxidized coenzyme F420-(gamma-L-Glu)(n) + NADPH + 2 H(+). Functionally, catalyzes the reduction of NADP(+) with F420H(2) via hydride transfer, and the reverse reaction, i.e. the reduction of F420 with NADPH. Probably functions in the regeneration of NADPH required in biosynthetic reactions. This chain is F420-dependent NADP reductase (fno), found in Methanocaldococcus jannaschii (strain ATCC 43067 / DSM 2661 / JAL-1 / JCM 10045 / NBRC 100440) (Methanococcus jannaschii).